The chain runs to 1167 residues: Tight junction protein 2 (1167 aa).

The region spanning 10–97 is the PDZ 1 domain; the sequence is TVTLQKDSKR…IAAIVVKRPR (88 aa). Phosphoserine occurs at positions 107, 127, 130, 140, 145, 147, 173, 194, 205, and 239. The disordered stretch occupies residues 129–195; it reads RSGYSERSRH…SRERSRGRSL (67 aa). Positions 225–286 are disordered; that stretch reads SYHEAYEPDY…KGQHDPDRPI (62 aa). The span at 242 to 262 shows a compositional bias: basic and acidic residues; sequence YDRRAHPETRYERSRSREHLR. In terms of domain architecture, PDZ 2 spans 287-365; the sequence is GVLLTKSKAN…KLQLVVLRDS (79 aa). A phosphoserine mark is found at S305, S378, S380, S386, S395, S404, S410, and S411. Positions 381-485 are disordered; that stretch reads EVEDISEIES…LRPSPEDEAI (105 aa). Basic and acidic residues predominate over residues 395-426; the sequence is SPEERRQQYSDQDYHSSTEKLKERPSSREETS. The residue at position 435 (T435) is a Phosphothreonine. The residue at position 479 (S479) is a Phosphoserine. The PDZ 3 domain occupies 489-570; the sequence is NTKMVRFKKG…GETVTILAQS (82 aa). Y554 carries the post-translational modification Phosphotyrosine. The SH3 domain maps to 584 to 649; the sequence is GDSFFIRSHF…PNKSRAEQMA (66 aa). Positions 660–858 constitute a Guanylate kinase-like domain; sequence GDRADFWRMR…WFGSLKDSIQ (199 aa). S684 and S884 each carry phosphoserine. T887 bears the Phosphothreonine mark. Residues S895 and S902 each carry the phosphoserine modification. Disordered regions lie at residues 904–1055 and 1095–1167; these read FEDT…PRSV and YAVP…DTEL. 2 positions are modified to phosphothreonine: T907 and T915. Basic and acidic residues predominate over residues 938–949; that stretch reads VQHEENIRKSSP. Phosphoserine occurs at positions 948, 960, 968, 988, and 1044. Over residues 976–990 the composition is skewed to basic and acidic residues; sequence EPPKARSQNREDSFD. Residues 1037 to 1049 are compositionally biased toward acidic residues; that stretch reads ESEEVGESTEEQE. Y1095 is subject to Phosphotyrosine. 2 positions are modified to phosphoserine: S1124 and S1136. Residues 1165-1167 are interaction with SCRIB; the sequence is TEL.

It belongs to the MAGUK family. Homodimer. Interacts (via PDZ2 domain) with TJP1/ZO1 (via PDZ2 domain). Interacts with UBN1. Interacts with SCRIB. Interacts with OCLN. Interacts with SAFB in the nucleus. Interacts with USP53 (via the C-terminal region). Interacts with claudins, including CLDN1, CLDN2, CLDN3, CLDN5 and CLDN7. Interacts with CLDN18. Interacts (via N-terminus) with CTNNA1.

The protein localises to the cell junction. It localises to the adherens junction. It is found in the cell membrane. The protein resides in the nucleus. Its subcellular location is the tight junction. Its function is as follows. Plays a role in tight junctions and adherens junctions. Acts as a positive regulator of RANKL-induced osteoclast differentiation, potentially via mediating downstream transcriptional activity. The sequence is that of Tight junction protein 2 from Mus musculus (Mouse).